The chain runs to 486 residues: UDP-N-acetylmuramate--L-alanine ligase (486 aa).

129-135 is an ATP binding site; it reads GTHGKTT.

Belongs to the MurCDEF family.

It is found in the cytoplasm. The catalysed reaction is UDP-N-acetyl-alpha-D-muramate + L-alanine + ATP = UDP-N-acetyl-alpha-D-muramoyl-L-alanine + ADP + phosphate + H(+). It participates in cell wall biogenesis; peptidoglycan biosynthesis. Functionally, cell wall formation. The polypeptide is UDP-N-acetylmuramate--L-alanine ligase (Vibrio cholerae serotype O1 (strain ATCC 39541 / Classical Ogawa 395 / O395)).